Consider the following 415-residue polypeptide: [Pyruvate dehydrogenase (acetyl-transferring)] kinase isozyme 3, mitochondrial (415 aa).

The Histidine kinase domain maps to I131–S362. Residue E247–R254 coordinates ATP. K278 carries the post-translational modification N6-succinyllysine. ATP contacts are provided by residues D287, S306–T307, and G323–L328. The disordered stretch occupies residues T383–F415. Positions E395 to F415 are enriched in basic and acidic residues.

This sequence belongs to the PDK/BCKDK protein kinase family. Homodimer. Interacts with the pyruvate dehydrogenase complex subunit DLAT, and is part of the multimeric pyruvate dehydrogenase complex that contains multiple copies of pyruvate dehydrogenase (E1), dihydrolipoamide acetyltransferase (DLAT, E2) and lipoamide dehydrogenase (DLD, E3).

It is found in the mitochondrion matrix. The catalysed reaction is L-seryl-[pyruvate dehydrogenase E1 alpha subunit] + ATP = O-phospho-L-seryl-[pyruvate dehydrogenase E1 alpha subunit] + ADP + H(+). Functionally, inhibits pyruvate dehydrogenase activity by phosphorylation of the E1 subunit PDHA1, and thereby regulates glucose metabolism and aerobic respiration. Can also phosphorylate PDHA2. Decreases glucose utilization and increases fat metabolism in response to prolonged fasting, and as adaptation to a high-fat diet. Plays a role in glucose homeostasis and in maintaining normal blood glucose levels in function of nutrient levels and under starvation. Plays a role in the generation of reactive oxygen species. The sequence is that of [Pyruvate dehydrogenase (acetyl-transferring)] kinase isozyme 3, mitochondrial (Pdk3) from Mus musculus (Mouse).